The chain runs to 407 residues: MWDLALIFLAAACVFSLGVTLWVICSHFFTVHIPAAVGHPVKLRVLHCIFQLLLTWGMIFEKLRICSMPQFFCFMQDLPPLKYDPDVVVTDFRFGTIPVKLYQPKASTCTLKPGIVYYHGGGGVMGSLKTHHGICSRLCKESDSVVLAVGYRKLPKHKFPVPVRDCLVATIHFLKSLDAYGVDPARVVVCGDSFGGAIAAVVCQQLVDRPDLPRIRAQILIYAILQALDLQTPSFQQRKNIPLLTWSFICYFFFQNLDFSSSWQEVIMKGAHLPAEVWEKYRKWLGPENIPERFKERGYQLKPHEPMNEAAYLEVSVVLDVMCSPLIAEDDIVSQLPETCIVSCEYDALRDNSLLYKKRLEDLGVPVTWHHMEDGFHGVLRTIDMSFLHFPCSMRILSALVQFVKGL.

An Involved in the stabilization of the negatively charged intermediate by the formation of the oxyanion hole motif is present at residues 119–121; the sequence is HGG. Catalysis depends on residues Ser-193, Asp-347, and His-377.

It belongs to the 'GDXG' lipolytic enzyme family.

The chain is Arylacetamide deacetylase-like 3 (AADACL3) from Homo sapiens (Human).